The primary structure comprises 145 residues: 3-dehydroquinate dehydratase (145 aa).

Catalysis depends on Tyr-22, which acts as the Proton acceptor. Positions 74, 80, and 87 each coordinate substrate. Residue His-100 is the Proton donor of the active site. Substrate-binding positions include 101–102 (IS) and Arg-111.

Belongs to the type-II 3-dehydroquinase family. As to quaternary structure, homododecamer.

It catalyses the reaction 3-dehydroquinate = 3-dehydroshikimate + H2O. The protein operates within metabolic intermediate biosynthesis; chorismate biosynthesis; chorismate from D-erythrose 4-phosphate and phosphoenolpyruvate: step 3/7. In terms of biological role, catalyzes a trans-dehydration via an enolate intermediate. The protein is 3-dehydroquinate dehydratase of Lachnoclostridium phytofermentans (strain ATCC 700394 / DSM 18823 / ISDg) (Clostridium phytofermentans).